We begin with the raw amino-acid sequence, 149 residues long: D-aminoacyl-tRNA deacylase (149 aa).

The Gly-cisPro motif, important for rejection of L-amino acids signature appears at 137–138; sequence GP.

It belongs to the DTD family. Homodimer.

Its subcellular location is the cytoplasm. It carries out the reaction glycyl-tRNA(Ala) + H2O = tRNA(Ala) + glycine + H(+). The catalysed reaction is a D-aminoacyl-tRNA + H2O = a tRNA + a D-alpha-amino acid + H(+). Its function is as follows. An aminoacyl-tRNA editing enzyme that deacylates mischarged D-aminoacyl-tRNAs. Also deacylates mischarged glycyl-tRNA(Ala), protecting cells against glycine mischarging by AlaRS. Acts via tRNA-based rather than protein-based catalysis; rejects L-amino acids rather than detecting D-amino acids in the active site. By recycling D-aminoacyl-tRNA to D-amino acids and free tRNA molecules, this enzyme counteracts the toxicity associated with the formation of D-aminoacyl-tRNA entities in vivo and helps enforce protein L-homochirality. The polypeptide is D-aminoacyl-tRNA deacylase (Paracoccus denitrificans (strain Pd 1222)).